The chain runs to 421 residues: eIF5-mimic protein 1 (421 aa).

The tract at residues 1–24 (MNTGKQQKPVLTGQRFKTRKRDEK) is disordered. Positions 250–417 (TQQTLGTRKE…QNAEEESESE (168 aa)) constitute a W2 domain.

Belongs to the BZW family.

It is found in the cytoplasm. In terms of biological role, translation initiation regulator which may repress non-AUG initiated translation and repeat-associated non-AUG (RAN) initiated translation by acting as a competitive inhibitor of eukaryotic translation initiation factor 5 (EIF5) function. This Danio rerio (Zebrafish) protein is eIF5-mimic protein 1 (bzw2).